The sequence spans 282 residues: D-alanine aminotransferase (282 aa).

Position 32 (Tyr-32) interacts with substrate. Residue Arg-51 coordinates pyridoxal 5'-phosphate. The substrate site is built by Arg-99 and His-101. The active-site Proton acceptor is the Lys-146. Lys-146 carries the post-translational modification N6-(pyridoxal phosphate)lysine. Residue Glu-178 coordinates pyridoxal 5'-phosphate.

The protein belongs to the class-IV pyridoxal-phosphate-dependent aminotransferase family. As to quaternary structure, homodimer. The cofactor is pyridoxal 5'-phosphate.

The catalysed reaction is D-alanine + 2-oxoglutarate = D-glutamate + pyruvate. Functionally, acts on the D-isomers of alanine, leucine, aspartate, glutamate, aminobutyrate, norvaline and asparagine. The enzyme transfers an amino group from a substrate D-amino acid to the pyridoxal phosphate cofactor to form pyridoxamine and an alpha-keto acid in the first half-reaction. The second half-reaction is the reverse of the first, transferring the amino group from the pyridoxamine to a second alpha-keto acid to form the product D-amino acid via a ping-pong mechanism. This is an important process in the formation of D-alanine and D-glutamate, which are essential bacterial cell wall components. This is D-alanine aminotransferase (dat) from Staphylococcus epidermidis (strain ATCC 35984 / DSM 28319 / BCRC 17069 / CCUG 31568 / BM 3577 / RP62A).